The following is an 85-amino-acid chain: Cell division topological specificity factor (85 aa).

This sequence belongs to the MinE family.

Prevents the cell division inhibition by proteins MinC and MinD at internal division sites while permitting inhibition at polar sites. This ensures cell division at the proper site by restricting the formation of a division septum at the midpoint of the long axis of the cell. This Shewanella amazonensis (strain ATCC BAA-1098 / SB2B) protein is Cell division topological specificity factor.